Reading from the N-terminus, the 168-residue chain is Pleiotrophin (168 aa).

Residues 1-32 form the signal peptide; it reads MSSQQYQQQRRKFAAAFLALIFILAAVDTAEA. 5 disulfide bridges follow: C47/C76, C55/C85, C62/C89, C99/C131, and C109/C141. 2 chondroitin sulfate binding regions span residues 92–99 and 123–131; these read KKQFGAEC and KRALHNADC. Positions 139 to 168 are disordered; the sequence is KPCGKLTKPKPQAESKKKKKEGKKQEKMLD. A chondroitin sulfate A binding region spans residues 147–168; that stretch reads PKPQAESKKKKKEGKKQEKMLD.

Belongs to the pleiotrophin family. In terms of assembly, interacts with ALK and NEK6. Interacts with PTPRZ1 (via chondroitin sulfate groups); promotes formation of homooligomers; oligomerization impairs tyrosine phosphatase activity. Forms a complex with PTPRZ1 and CTNNB1; this complex inactivates PTPRZ1 protein tyrosine phosphatase activity through PTN interaction and stimulates tyrosine phosphorylation of CTNNB1. Interacts with ITGB3 and ITGA5. Forms a complex with PTPRZ1 and integrin alpha-V/beta-3 (ITGAV:ITGB3) that stimulates endothelial cell migration through ITGB3 'Tyr-773' phosphorylation. Interacts with SDC3 (via heparan sulfate chains); this interaction mediates the neurite outgrowth-promoting signal from PTN to the cytoskeleton of growing neurites; this interaction mediates osteoblast recruitment. Interacts with GPC2 (via heparan sulfate); this interaction promotes neurite outgrowth through binding of PTN with chondroitin sulfate of proteoglycans, thereby releasing PTPRS of chondroitin sulfate proteoglycans (CSPGs) and leading to binding with heparan sulfate of GPC2. In terms of processing, phosphorylated by NEK6. In terms of tissue distribution, osteoblast and brain. Expressed in the follicular epithelium and granulosa cells of the ovary. Strongly expressed in the uterus of newborn mice, and the degree of expression decreased in one-week-old mice, although the expression continues even in the uteri of adult mice. Expression gradually increases from proestrus to estrus, then decreases sharply, and thereafter gradually increased again. strongly expressed in the cochlea of WT mice 1 week after birth, and then the expression decreased and was undetectable by week 8 after birth. Expressed around the cell soma of osteocytes and apparently captured in the unmineralized interstitial matrix surrounding the cells. Furthermore distributed throughout the intraosseous canalicular porosity, being localized in the unmineralized matrix around the cell processes. Strongly expressed in the innermost layer of the periosteum.

The protein resides in the secreted. In terms of biological role, secreted growth factor that mediates its signal through cell-surface proteoglycan and non-proteoglycan receptors. Binds cell-surface proteoglycan receptor via their chondroitin sulfate (CS) groups. Thereby regulates many processes like cell proliferation, cell survival, cell growth, cell differentiation and cell migration in several tissues namely neuron and bone. Also plays a role in synaptic plasticity and learning-related behavior by inhibiting long-term synaptic potentiation. Binds PTPRZ1, leading to neutralization of the negative charges of the CS chains of PTPRZ1, inducing PTPRZ1 clustering, thereby causing the dimerization and inactivation of its phosphatase activity leading to increased tyrosine phosphorylation of each of the PTPRZ1 substrates like ALK or AFAP1L2 in order to activate the PI3K-AKT pathway. Through PTPRZ1 binding controls oligodendrocyte precursor cell differentiation by enhancing the phosphorylation of AFAP1L2 in order to activate the PI3K-AKT pathway. Forms a complex with PTPRZ1 and integrin alpha-V/beta-3 (ITGAV:ITGB3) that stimulates endothelial cell migration through SRC dephosphorylation and activation that consequently leads to ITGB3 'Tyr-773' phosphorylation. In adult hippocampus promotes dendritic arborization, spine development, and functional integration and connectivity of newborn granule neurons through ALK by activating AKT signaling pathway. Binds GPC2 and chondroitin sulfate proteoglycans (CSPGs) at the neuron surface, leading to abrogation of binding between PTPRS and CSPGs and neurite outgrowth promotion. Binds SDC3 and mediates bone formation by recruiting and attaching osteoblasts/osteoblast precursors to the sites for new bone deposition. Binds ALK and promotes cell survival and cell proliferation through MAPK pathway activation. Inhibits proliferation and enhances differentiation of neural stem cells by inhibiting FGF2-induced fibroblast growth factor receptor signaling pathway. Mediates regulatory mechanisms in normal hemostasis and in hematopoietic regeneration and in maintaining the balance of myeloid and lymphoid regeneration. In addition may play a role in the female reproductive system, auditory response and the progesterone-induced decidualization pathway. The polypeptide is Pleiotrophin (Mus musculus (Mouse)).